The sequence spans 292 residues: Large ribosomal subunit protein uL18 (292 aa).

Belongs to the universal ribosomal protein uL18 family. Component of the large ribosomal subunit (LSU).

It is found in the cytoplasm. Its subcellular location is the nucleus. Functionally, component of the ribosome, a large ribonucleoprotein complex responsible for the synthesis of proteins in the cell. The small ribosomal subunit (SSU) binds messenger RNAs (mRNAs) and translates the encoded message by selecting cognate aminoacyl-transfer RNA (tRNA) molecules. The large subunit (LSU) contains the ribosomal catalytic site termed the peptidyl transferase center (PTC), which catalyzes the formation of peptide bonds, thereby polymerizing the amino acids delivered by tRNAs into a polypeptide chain. The nascent polypeptides leave the ribosome through a tunnel in the LSU and interact with protein factors that function in enzymatic processing, targeting, and the membrane insertion of nascent chains at the exit of the ribosomal tunnel. This Dictyostelium discoideum (Social amoeba) protein is Large ribosomal subunit protein uL18 (rpl5).